A 303-amino-acid polypeptide reads, in one-letter code: N-acetylmuramic acid 6-phosphate etherase (303 aa).

The 164-residue stretch at 62-225 (IVAAFRQGGR…TTASMVLLGK (164 aa)) folds into the SIS domain. Glutamate 90 functions as the Proton donor in the catalytic mechanism. Residue glutamate 121 is part of the active site.

The protein belongs to the GCKR-like family. MurNAc-6-P etherase subfamily. In terms of assembly, homodimer.

The enzyme catalyses N-acetyl-D-muramate 6-phosphate + H2O = N-acetyl-D-glucosamine 6-phosphate + (R)-lactate. The protein operates within amino-sugar metabolism; 1,6-anhydro-N-acetylmuramate degradation. It functions in the pathway amino-sugar metabolism; N-acetylmuramate degradation. Its pathway is cell wall biogenesis; peptidoglycan recycling. Its function is as follows. Specifically catalyzes the cleavage of the D-lactyl ether substituent of MurNAc 6-phosphate, producing GlcNAc 6-phosphate and D-lactate. Together with AnmK, is also required for the utilization of anhydro-N-acetylmuramic acid (anhMurNAc) either imported from the medium or derived from its own cell wall murein, and thus plays a role in cell wall recycling. The polypeptide is N-acetylmuramic acid 6-phosphate etherase (Histophilus somni (strain 129Pt) (Haemophilus somnus)).